Reading from the N-terminus, the 349-residue chain is Palmitoyltransferase PFA5 (349 aa).

2 helical membrane-spanning segments follow: residues 19 to 39 and 57 to 77; these read LIPF…CHQF and LIIV…LMLV. Residues 126 to 176 enclose the DHHC domain; sequence IWCSNCQSLKMSRTHHSTKVGYCVPRFDHYCVWIGTVLGRLNYKLFVQFTF. The active-site S-palmitoyl cysteine intermediate is C156. 2 consecutive transmembrane segments (helical) span residues 170 to 190 and 204 to 224; these read LFVQ…ISIA and VYAV…LFLT.

This sequence belongs to the DHHC palmitoyltransferase family. PFA5 subfamily.

The protein localises to the membrane. The enzyme catalyses L-cysteinyl-[protein] + hexadecanoyl-CoA = S-hexadecanoyl-L-cysteinyl-[protein] + CoA. The polypeptide is Palmitoyltransferase PFA5 (PFA5) (Kluyveromyces lactis (strain ATCC 8585 / CBS 2359 / DSM 70799 / NBRC 1267 / NRRL Y-1140 / WM37) (Yeast)).